The primary structure comprises 231 residues: Probable septum site-determining protein MinC (231 aa).

A disordered region spans residues 100–125 (EGKEKSPRPAPAPQAPAQNTTPVTKT).

It belongs to the MinC family. In terms of assembly, interacts with MinD and FtsZ.

Functionally, cell division inhibitor that blocks the formation of polar Z ring septums. Rapidly oscillates between the poles of the cell to destabilize FtsZ filaments that have formed before they mature into polar Z rings. Prevents FtsZ polymerization. This is Probable septum site-determining protein MinC from Escherichia coli O81 (strain ED1a).